A 329-amino-acid chain; its full sequence is Basic leucine zipper 61 (329 aa).

Disordered regions lie at residues 1–22 (MAQL…FSSQ) and 98–204 (DDVH…HDPK). The segment covering 10-22 (TMTTPNWPDFSSQ) has biased composition (polar residues). Residues 119 to 133 (PTRSSSNTSTPSDHN) show a composition bias toward low complexity. Over residues 139 to 154 (DNNKEAPPSDHDHHMD) the composition is skewed to basic and acidic residues. Positions 155–169 (NNVANQNNAAGNNYN) are enriched in low complexity. One can recognise a bZIP domain in the interval 202–254 (DPKRVKRILANRQSAQRSRVRKLQYISELERSVTSLQTEVSVLSPRVAFLDHQ). Residues 204 to 223 (KRVKRILANRQSAQRSRVRK) are basic motif. The tract at residues 230–251 (LERSVTSLQTEVSVLSPRVAFL) is leucine-zipper. Residues 304-313 (KMENNVSDQS) show a composition bias toward polar residues. A disordered region spans residues 304–329 (KMENNVSDQSPADIKPSVEKEQLLNV). The span at 319 to 329 (PSVEKEQLLNV) shows a compositional bias: basic and acidic residues.

As to quaternary structure, forms heterodimers with BZIP18, BZIP43 and VIP1/BZIP51.

It localises to the nucleus. Functionally, transcriptional activator. In Arabidopsis thaliana (Mouse-ear cress), this protein is Basic leucine zipper 61.